We begin with the raw amino-acid sequence, 170 residues long: Calcineurin subunit B type 2 (170 aa).

The N-myristoyl glycine moiety is linked to residue Gly2. EF-hand domains lie at 18–46 (DEIKRLRKRFKKLDLDSSSALSVKEFTSM), 50–85 (QENPLVQRVIDVFDTDGDGQVDFREFILGTSQFSVR), 87–122 (DEEQKLRFAFSIYDMDKDGYISNGELFQVLKMMVGD), and 128–163 (QLQQLVDKTIILLDKDGDGKISFQEFSAVVRSLEIH). Positions 63, 65, 67, 69, 74, 100, 102, 104, 106, and 111 each coordinate Ca(2+). A calcineurin A binding region spans residues 131-136 (QLVDKT). Positions 141, 143, 145, 147, and 152 each coordinate Ca(2+).

The protein belongs to the calcineurin regulatory subunit family. As to quaternary structure, forms a complex composed of a calmodulin-dependent catalytic subunit (also known as calcineurin A) and a regulatory Ca(2+)-binding subunit (also known as calcineurin B). There are three catalytic subunits, each encoded by a separate gene (PPP3CA, PPP3CB, and PPP3CC) and two regulatory subunits which are also encoded by separate genes (PPP3R1 and PPP3R2). Interacts with SPATA33 (via PQIIIT motif).

The protein resides in the mitochondrion. Regulatory subunit of calcineurin, a calcium-dependent, calmodulin stimulated protein phosphatase. Confers calcium sensitivity. The sequence is that of Calcineurin subunit B type 2 (PPP3R2) from Bos taurus (Bovine).